A 132-amino-acid polypeptide reads, in one-letter code: Large ribosomal subunit protein bL20c (132 aa).

It belongs to the bacterial ribosomal protein bL20 family.

It is found in the plastid. The protein resides in the chloroplast. In terms of biological role, binds directly to 23S ribosomal RNA and is necessary for the in vitro assembly process of the 50S ribosomal subunit. It is not involved in the protein synthesizing functions of that subunit. The polypeptide is Large ribosomal subunit protein bL20c (Coffea arabica (Arabian coffee)).